Here is a 258-residue protein sequence, read N- to C-terminus: 5'-nucleotidase SurE (258 aa).

Asp18, Asp19, Ser49, and Asn102 together coordinate a divalent metal cation.

Belongs to the SurE nucleotidase family. A divalent metal cation is required as a cofactor.

It localises to the cytoplasm. The enzyme catalyses a ribonucleoside 5'-phosphate + H2O = a ribonucleoside + phosphate. In terms of biological role, nucleotidase that shows phosphatase activity on nucleoside 5'-monophosphates. In Vibrio parahaemolyticus serotype O3:K6 (strain RIMD 2210633), this protein is 5'-nucleotidase SurE.